Reading from the N-terminus, the 828-residue chain is Conserved oligomeric Golgi complex subunit 3 (828 aa).

Residue alanine 2 is modified to N-acetylalanine. The interval 504–543 (DEQKKVPSEASFSDVHLEEGESNSLTKSGSTESLNPRPQT) is disordered. Polar residues predominate over residues 525-543 (SNSLTKSGSTESLNPRPQT). The residue at position 663 (serine 663) is a Phosphoserine.

It belongs to the COG3 family. In terms of assembly, component of the conserved oligomeric Golgi complex which is composed of eight different subunits and is required for normal Golgi morphology and localization. Interacts with TMEM115. Widely expressed with highest levels in pancreas and testis and lowest levels in lung.

The protein localises to the golgi apparatus. It is found in the golgi stack membrane. In terms of biological role, involved in ER-Golgi transport. Also involved in retrograde (Golgi to ER) transport. This Homo sapiens (Human) protein is Conserved oligomeric Golgi complex subunit 3 (COG3).